We begin with the raw amino-acid sequence, 443 residues long: Thymidine phosphorylase (443 aa).

The protein belongs to the thymidine/pyrimidine-nucleoside phosphorylase family. Homodimer.

It catalyses the reaction thymidine + phosphate = 2-deoxy-alpha-D-ribose 1-phosphate + thymine. The protein operates within pyrimidine metabolism; dTMP biosynthesis via salvage pathway; dTMP from thymine: step 1/2. The enzymes which catalyze the reversible phosphorolysis of pyrimidine nucleosides are involved in the degradation of these compounds and in their utilization as carbon and energy sources, or in the rescue of pyrimidine bases for nucleotide synthesis. The polypeptide is Thymidine phosphorylase (Shewanella frigidimarina (strain NCIMB 400)).